The sequence spans 386 residues: N-acetylneuraminate epimerase (386 aa).

The signal sequence occupies residues 1–29 (MGMQMKNSKKMMTLMALCLSVAITTSGYA). Kelch repeat units lie at residues 51–95 (VIYV…VFLN), 97–149 (ELYV…VKLN), 151–186 (TMALITGGVNEHIFDKYFIDIAAAAGDDSEKNRVIY), 187–232 (NYFN…AMEN), 235–284 (LTLI…LAGA), 306–355 (QNYT…NYGD), and 357–386 (IFLIGGENAKGKPVSSVISFAMHDGKLLIE). The active-site Proton acceptor is the Glu241.

This sequence belongs to the NanM family. In terms of assembly, homodimer.

The protein resides in the periplasm. The catalysed reaction is N-acetyl-alpha-neuraminate = N-acetyl-beta-neuraminate. In terms of biological role, converts alpha-N-acetylneuranimic acid (Neu5Ac) to the beta-anomer, accelerating the equilibrium between the alpha- and beta-anomers. Probably facilitates sialidase-negative bacteria to compete successfully for limited amounts of extracellular Neu5Ac, which is likely taken up in the beta-anomer. In addition, the rapid removal of sialic acid from solution might be advantageous to the bacterium to damp down host responses. In Salmonella arizonae (strain ATCC BAA-731 / CDC346-86 / RSK2980), this protein is N-acetylneuraminate epimerase.